Here is a 125-residue protein sequence, read N- to C-terminus: MGFVKVVKNKAYFKRYQVKFRRRREGKTDYYARKRLVIQDKNKYNTPKYRMIVRVTNRDIICQIAYARIEGDMIVCAAYAHELPKYGVKVGLTNYAAAYCTGLLLARRLLNRFGMXKIYGGQVEV.

At glycine 2 the chain carries N-acetylglycine. 2 positions are modified to N6-acetyllysine: lysine 5 and lysine 48.

It belongs to the universal ribosomal protein uL18 family. As to quaternary structure, component of the large ribosomal subunit (LSU). Part of the 5S RNP complex, which is a LSU subcomplex composed of the 5S RNA, RPL5 and RPL11. Component of a hexameric 5S RNP precursor complex, composed of 5S RNA, RRS1, RPF2/BXDC1, RPL5, RPL11 and HEATR3; this complex acts as a precursor for ribosome assembly. Interacts with NVL in an ATP-dependent manner. Interacts with RRP1B. Interacts with IPO5, IPO7 and KPNB1; these interactions may be involved in RPL5 nuclear import for the assembly of ribosomal subunits. Interacts with RRP1B.

It is found in the cytoplasm. The protein resides in the nucleus. Its subcellular location is the nucleolus. Functionally, component of the ribosome, a large ribonucleoprotein complex responsible for the synthesis of proteins in the cell. The small ribosomal subunit (SSU) binds messenger RNAs (mRNAs) and translates the encoded message by selecting cognate aminoacyl-transfer RNA (tRNA) molecules. The large subunit (LSU) contains the ribosomal catalytic site termed the peptidyl transferase center (PTC), which catalyzes the formation of peptide bonds, thereby polymerizing the amino acids delivered by tRNAs into a polypeptide chain. The nascent polypeptides leave the ribosome through a tunnel in the LSU and interact with protein factors that function in enzymatic processing, targeting, and the membrane insertion of nascent chains at the exit of the ribosomal tunnel. As part of the 5S RNP/5S ribonucleoprotein particle it is an essential component of the LSU, required for its formation and the maturation of rRNAs. It also couples ribosome biogenesis to p53/TP53 activation. As part of the 5S RNP it accumulates in the nucleoplasm and inhibits MDM2, when ribosome biogenesis is perturbed, mediating the stabilization and the activation of TP53. This chain is Large ribosomal subunit protein uL18 (RPL5), found in Sus scrofa (Pig).